The sequence spans 819 residues: Protein EFR3 homolog A (819 aa).

Positions 210–230 are disordered; the sequence is DTDSRTGPPASPTTGDKEENP.

The protein belongs to the EFR3 family. As to quaternary structure, component of a phosphatidylinositol 4-kinase (PI4K) complex. Palmitoylated at its N-terminus, anchoring the protein to the plasma membrane.

It localises to the cell membrane. Component of a complex required to localize phosphatidylinositol 4-kinase (PI4K) to the plasma membrane. The complex acts as a regulator of phosphatidylinositol 4-phosphate (PtdIns(4)P) synthesis. In the complex, efr3a probably acts as the membrane-anchoring component. This is Protein EFR3 homolog A (efr3a) from Xenopus laevis (African clawed frog).